Here is a 415-residue protein sequence, read N- to C-terminus: Cysteate synthase (415 aa).

Lysine 104 carries the post-translational modification N6-(pyridoxal phosphate)lysine. Residues asparagine 131 and threonine 376 each contribute to the pyridoxal 5'-phosphate site.

This sequence belongs to the threonine synthase family. Cysteate synthase subfamily. In terms of assembly, homotrimer. Pyridoxal 5'-phosphate serves as cofactor.

The enzyme catalyses O-phospho-L-serine + sulfite + H(+) = L-cysteate + phosphate. The protein operates within cofactor biosynthesis; coenzyme M biosynthesis. Its function is as follows. Specifically catalyzes the beta-elimination of phosphate from L-phosphoserine and the beta-addition of sulfite to the dehydroalanine intermediate to produce L-cysteate. This Methanothrix thermoacetophila (strain DSM 6194 / JCM 14653 / NBRC 101360 / PT) (Methanosaeta thermophila) protein is Cysteate synthase.